The sequence spans 539 residues: NADH-quinone oxidoreductase subunit N 2 (539 aa).

13 helical membrane-spanning segments follow: residues 11–31 (LIPE…DVLT), 52–72 (LMGL…FSWM), 106–126 (PLTH…VILT), 141–161 (LILF…LIMI), 193–213 (YIFG…LLGL), 248–268 (GVAI…VAIV), 296–316 (AGFF…SILG), 329–349 (WTSL…LAAL), 357–377 (MLAY…VGTQ), 385–405 (LMYL…LALV), 429–449 (LLLT…GFFV), 462–484 (AKWL…LRFL), and 500–520 (VGFG…GLGI).

Belongs to the complex I subunit 2 family. As to quaternary structure, NDH-1 is composed of 14 different subunits. Subunits NuoA, H, J, K, L, M, N constitute the membrane sector of the complex.

It localises to the cell membrane. It catalyses the reaction a quinone + NADH + 5 H(+)(in) = a quinol + NAD(+) + 4 H(+)(out). In terms of biological role, NDH-1 shuttles electrons from NADH, via FMN and iron-sulfur (Fe-S) centers, to quinones in the respiratory chain. The immediate electron acceptor for the enzyme in this species is believed to be ubiquinone. Couples the redox reaction to proton translocation (for every two electrons transferred, four hydrogen ions are translocated across the cytoplasmic membrane), and thus conserves the redox energy in a proton gradient. This Herpetosiphon aurantiacus (strain ATCC 23779 / DSM 785 / 114-95) protein is NADH-quinone oxidoreductase subunit N 2.